A 111-amino-acid chain; its full sequence is Aspartate 1-decarboxylase (111 aa).

S25 functions as the Schiff-base intermediate with substrate; via pyruvic acid in the catalytic mechanism. Position 25 is a pyruvic acid (Ser) (S25). Residue T57 participates in substrate binding. The active-site Proton donor is the Y58. 73 to 75 contributes to the substrate binding site; it reads GPA.

The protein belongs to the PanD family. Heterooctamer of four alpha and four beta subunits. Requires pyruvate as cofactor. Is synthesized initially as an inactive proenzyme, which is activated by self-cleavage at a specific serine bond to produce a beta-subunit with a hydroxyl group at its C-terminus and an alpha-subunit with a pyruvoyl group at its N-terminus.

The protein localises to the cytoplasm. It catalyses the reaction L-aspartate + H(+) = beta-alanine + CO2. It functions in the pathway cofactor biosynthesis; (R)-pantothenate biosynthesis; beta-alanine from L-aspartate: step 1/1. Its function is as follows. Catalyzes the pyruvoyl-dependent decarboxylation of aspartate to produce beta-alanine. The protein is Aspartate 1-decarboxylase of Francisella tularensis subsp. holarctica (strain LVS).